Here is a 230-residue protein sequence, read N- to C-terminus: Large ribosomal subunit protein uL1 (230 aa).

It belongs to the universal ribosomal protein uL1 family. As to quaternary structure, part of the 50S ribosomal subunit.

Functionally, binds directly to 23S rRNA. The L1 stalk is quite mobile in the ribosome, and is involved in E site tRNA release. In terms of biological role, protein L1 is also a translational repressor protein, it controls the translation of the L11 operon by binding to its mRNA. In Desulforapulum autotrophicum (strain ATCC 43914 / DSM 3382 / VKM B-1955 / HRM2) (Desulfobacterium autotrophicum), this protein is Large ribosomal subunit protein uL1.